Consider the following 53-residue polypeptide: Sec-independent protein translocase protein TatA (53 aa).

The helical transmembrane segment at Met1–Ala21 threads the bilayer.

The protein belongs to the TatA/E family. In terms of assembly, the Tat system comprises two distinct complexes: a TatABC complex, containing multiple copies of TatA, TatB and TatC subunits, and a separate TatA complex, containing only TatA subunits. Substrates initially bind to the TatABC complex, which probably triggers association of the separate TatA complex to form the active translocon.

It is found in the cell inner membrane. Part of the twin-arginine translocation (Tat) system that transports large folded proteins containing a characteristic twin-arginine motif in their signal peptide across membranes. TatA could form the protein-conducting channel of the Tat system. The polypeptide is Sec-independent protein translocase protein TatA (Rickettsia conorii (strain ATCC VR-613 / Malish 7)).